The chain runs to 756 residues: 5-methyltetrahydropteroyltriglutamate--homocysteine methyltransferase (756 aa).

5-methyltetrahydropteroyltri-L-glutamate is bound by residues 20–23 (RELK) and Lys-114. L-homocysteine contacts are provided by residues 433 to 435 (IGS) and Glu-486. Residues 433 to 435 (IGS) and Glu-486 contribute to the L-methionine site. Residues 517 to 518 (RC) and Trp-563 contribute to the 5-methyltetrahydropteroyltri-L-glutamate site. Residue Asp-601 coordinates L-homocysteine. Residue Asp-601 coordinates L-methionine. Glu-607 is a 5-methyltetrahydropteroyltri-L-glutamate binding site. The Zn(2+) site is built by His-643, Cys-645, and Glu-667. Residue His-696 is the Proton donor of the active site. Zn(2+) is bound at residue Cys-728.

Belongs to the vitamin-B12 independent methionine synthase family. Requires Zn(2+) as cofactor.

It catalyses the reaction 5-methyltetrahydropteroyltri-L-glutamate + L-homocysteine = tetrahydropteroyltri-L-glutamate + L-methionine. The protein operates within amino-acid biosynthesis; L-methionine biosynthesis via de novo pathway; L-methionine from L-homocysteine (MetE route): step 1/1. Its function is as follows. Catalyzes the transfer of a methyl group from 5-methyltetrahydrofolate to homocysteine resulting in methionine formation. The protein is 5-methyltetrahydropteroyltriglutamate--homocysteine methyltransferase of Mycolicibacterium paratuberculosis (strain ATCC BAA-968 / K-10) (Mycobacterium paratuberculosis).